The following is a 527-amino-acid chain: MAPIHYLLPIITLGSAALARQDAFEAKCHSFANKIHLPNVHVNFASYVPGGTNLTLADNPSSCGATSQSVSADVCRVAMAVATSNSSEITLEAWFPRNYTGRFLSTGNGGLSGCIQYYDMAYTTGFGFATVGANNGHNGTSGEPFYHHPEVLEDFAYRSIHTGVVIGKKLTKMFYEEGFNKSYYLGCSTGGRQGFKSVQKYPNDFDGVVAGAPAFNFANLISWSAHFYPITGPPGSDTYLSPAMWKVAHDEIIRQCDQIDGAKDGIIEDPSLCNPIMETIICKPGASSDNCLSAAQAKTVREVLYPLYGVNGTLLYPRMQPGSEVLAAPIMYNGQPFAYSTDWYRYVVYNDPNWNGTTFDVQDAAAALAQNPYNIQTWDADLTPFRKSGGKVLTYHGLQDQLISSENSKLYYARVAETMGMPPEELDEFYRFFQISGMGHCGGGDGAYGIGNGLATYSGKDPENNVLMAMVQWVEKGIAPETVRGAKFANGPGSTVEYSRKHCRYPRRNVFKGPGNYTDENAWECVV.

The signal sequence occupies residues 1–19; the sequence is MAPIHYLLPIITLGSAALA. Intrachain disulfides connect cysteine 28-cysteine 75 and cysteine 63-cysteine 114. N-linked (GlcNAc...) asparagine glycans are attached at residues asparagine 53, asparagine 85, asparagine 98, asparagine 138, and asparagine 180. Disulfide bonds link cysteine 187–cysteine 441, cysteine 256–cysteine 273, cysteine 282–cysteine 291, and cysteine 503–cysteine 525. The active-site Acyl-ester intermediate is serine 188. Ca(2+) contacts are provided by aspartate 257, aspartate 260, alanine 262, aspartate 264, and isoleucine 266. N-linked (GlcNAc...) asparagine glycosylation is found at asparagine 311 and asparagine 355. Active-site charge relay system residues include aspartate 400 and histidine 440. Asparagine 516 carries N-linked (GlcNAc...) asparagine glycosylation.

It belongs to the tannase family.

The protein localises to the secreted. The catalysed reaction is feruloyl-polysaccharide + H2O = ferulate + polysaccharide.. Its function is as follows. Involved in degradation of plant cell walls. Hydrolyzes the feruloyl-arabinose ester bond in arabinoxylans as well as the feruloyl-galactose and feruloyl-arabinose ester bonds in pectin. The chain is Probable feruloyl esterase B-2 (faeB-2) from Aspergillus terreus (strain NIH 2624 / FGSC A1156).